We begin with the raw amino-acid sequence, 157 residues long: 2-C-methyl-D-erythritol 2,4-cyclodiphosphate synthase (157 aa).

2 residues coordinate a divalent metal cation: Asp8 and His10. 4-CDP-2-C-methyl-D-erythritol 2-phosphate contacts are provided by residues Asp8–His10 and His34–Ser35. A divalent metal cation is bound at residue His42. Residues Asp56 to Gly58, Phe61 to Asp65, Ala100 to Ala106, Thr132 to Glu135, and Phe139 contribute to the 4-CDP-2-C-methyl-D-erythritol 2-phosphate site.

The protein belongs to the IspF family. Homotrimer. The cofactor is a divalent metal cation.

It carries out the reaction 4-CDP-2-C-methyl-D-erythritol 2-phosphate = 2-C-methyl-D-erythritol 2,4-cyclic diphosphate + CMP. The protein operates within isoprenoid biosynthesis; isopentenyl diphosphate biosynthesis via DXP pathway; isopentenyl diphosphate from 1-deoxy-D-xylulose 5-phosphate: step 4/6. In terms of biological role, involved in the biosynthesis of isopentenyl diphosphate (IPP) and dimethylallyl diphosphate (DMAPP), two major building blocks of isoprenoid compounds. Catalyzes the conversion of 4-diphosphocytidyl-2-C-methyl-D-erythritol 2-phosphate (CDP-ME2P) to 2-C-methyl-D-erythritol 2,4-cyclodiphosphate (ME-CPP) with a corresponding release of cytidine 5-monophosphate (CMP). This Alkaliphilus oremlandii (strain OhILAs) (Clostridium oremlandii (strain OhILAs)) protein is 2-C-methyl-D-erythritol 2,4-cyclodiphosphate synthase.